A 2147-amino-acid polypeptide reads, in one-letter code: Probable serine/threonine-protein kinase roco6 (2147 aa).

The Extracellular portion of the chain corresponds to 1–1055 (MNSIHKQHYT…LDHSRVEFNR (1055 aa)). LRR repeat units follow at residues 69–89 (DMKYLDLSKRMIYSLELMMIP), 101–122 (SISILNLNDNLLGEIPESLKQL), 124–145 (QLISLSIRGNHILEIPLWFPEE), 148–169 (LLRKLDVSHNAISSVPNTFNKF), 171–192 (ILEDLNLSNNYISYIHPSLFPE), 193–214 (GIMRLNLSNNLFREVELPPWFE), 215–236 (SLLTLDISGNKLKHLGNLPFHL), 237–256 (VRVSIDDNHLESIDHKVILR), 306–328 (HLTHLDLSGNCISVLPPELANLT), 329–350 (ELVRLDLSFNILTTLPLYIVSY), and 352–372 (RLEHLDLQGTLDTLVSPPRRI). The 361-residue stretch at 390–750 (QGEPSYRVKL…DLLKKTVVEL (361 aa)) folds into the Roc domain. The tract at residues 390-750 (QGEPSYRVKL…DLLKKTVVEL (361 aa)) is small GTPase-like. 403–410 (GQENVGKT) contributes to the GTP binding site. 2 disordered regions span residues 491–582 (NSNG…VGTN) and 602–621 (SNLSIGGSNGNNNNNSGGSG). Low complexity-rich tracts occupy residues 492 to 512 (SNGVNSNSQININSSSGNIHS), 519 to 531 (NVNSSGGIHSNNS), 539 to 568 (NSFLNNTNSNGTNNNSSNLNINTNSNNVNS), and 602 to 617 (SNLSIGGSNGNNNNNS). GTP is bound by residues 634–638 (DCAGQ) and 691–694 (THLD). One can recognise a COR domain in the interval 758 to 892 (PELYLKLEKL…RFELMFPLDS (135 aa)). Composition is skewed to low complexity over residues 905–941 (GNSYVNNNNNNNNNSNNNNNGSNKSSPFKTTPSSPST) and 960–977 (SGNNSSSKNSTSTKRSIS). Residues 905–995 (GNSYVNNNNN…NSDLDLIGGG (91 aa)) form a disordered region. A WD 1 repeat occupies 1051-1098 (VEFNRWIQLSFAPAGLFSRLLIRLLISKEFDMKPILYWRNGVVVESQS). Residues 1056-1076 (WIQLSFAPAGLFSRLLIRLLI) traverse the membrane as a helical segment. Residues 1077 to 2147 (SKEFDMKPIL…CGTNNVCIWS (1071 aa)) lie on the Cytoplasmic side of the membrane. LRR repeat units follow at residues 1237 to 1263 (ILSIKPASFGNNQIQFEVRVPPSPPPP), 1274 to 1297 (DDNITTTTLAVNNIKVLESGGSQP), and 1325 to 1348 (ESSLIQVEFDHNNQTLVISGTYKY). One can recognise a Protein kinase domain in the interval 1356-1627 (FESPKLIGRG…KIVKRIKQII (272 aa)). ATP is bound by residues 1362–1370 (IGRGASGKI) and K1383. The active-site Proton acceptor is D1481. The tract at residues 1653 to 1699 (ADSQPFHYHQQQQPSLNSTNQLQQQQYSSVLTSPRSNLSDSSNSSQN) is disordered. Low complexity predominate over residues 1662 to 1699 (QQQQPSLNSTNQLQQQQYSSVLTSPRSNLSDSSNSSQN). WD repeat units follow at residues 1735-1774 (QPEAKVNQLVWEVNSRRVWGGCESGEIIVWNAENGNQIFR) and 1778-1820 (LHPG…LDDQ). The region spanning 1821–1923 (SGTKSDFITK…WLTAINRVIN (103 aa)) is the PH domain. Residues 2031-2068 (HYSKPITSMALVEKNVWISCEDESLSVWDGDTGSFIRK) form a WD 4 repeat.

It belongs to the protein kinase superfamily. TKL Ser/Thr protein kinase family. ROCO subfamily.

It is found in the membrane. It carries out the reaction L-seryl-[protein] + ATP = O-phospho-L-seryl-[protein] + ADP + H(+). It catalyses the reaction L-threonyl-[protein] + ATP = O-phospho-L-threonyl-[protein] + ADP + H(+). Functionally, may act as a serine/threonine-protein kinase and guanine-nucleotide releasing factor. This is Probable serine/threonine-protein kinase roco6 (roco6) from Dictyostelium discoideum (Social amoeba).